We begin with the raw amino-acid sequence, 177 residues long: ATP synthase subunit delta (177 aa).

This sequence belongs to the ATPase delta chain family. In terms of assembly, F-type ATPases have 2 components, F(1) - the catalytic core - and F(0) - the membrane proton channel. F(1) has five subunits: alpha(3), beta(3), gamma(1), delta(1), epsilon(1). F(0) has three main subunits: a(1), b(2) and c(10-14). The alpha and beta chains form an alternating ring which encloses part of the gamma chain. F(1) is attached to F(0) by a central stalk formed by the gamma and epsilon chains, while a peripheral stalk is formed by the delta and b chains.

Its subcellular location is the cell inner membrane. F(1)F(0) ATP synthase produces ATP from ADP in the presence of a proton or sodium gradient. F-type ATPases consist of two structural domains, F(1) containing the extramembraneous catalytic core and F(0) containing the membrane proton channel, linked together by a central stalk and a peripheral stalk. During catalysis, ATP synthesis in the catalytic domain of F(1) is coupled via a rotary mechanism of the central stalk subunits to proton translocation. Its function is as follows. This protein is part of the stalk that links CF(0) to CF(1). It either transmits conformational changes from CF(0) to CF(1) or is implicated in proton conduction. The polypeptide is ATP synthase subunit delta (Shewanella amazonensis (strain ATCC BAA-1098 / SB2B)).